The chain runs to 337 residues: tRNA N6-adenosine threonylcarbamoyltransferase (337 aa).

The Fe cation site is built by histidine 110 and histidine 114. Residues 132–136, aspartate 165, glycine 178, aspartate 182, and asparagine 268 each bind substrate; that span reads VVSGG. Aspartate 293 serves as a coordination point for Fe cation.

It belongs to the KAE1 / TsaD family. It depends on Fe(2+) as a cofactor.

The protein localises to the cytoplasm. It catalyses the reaction L-threonylcarbamoyladenylate + adenosine(37) in tRNA = N(6)-L-threonylcarbamoyladenosine(37) in tRNA + AMP + H(+). Its function is as follows. Required for the formation of a threonylcarbamoyl group on adenosine at position 37 (t(6)A37) in tRNAs that read codons beginning with adenine. Is involved in the transfer of the threonylcarbamoyl moiety of threonylcarbamoyl-AMP (TC-AMP) to the N6 group of A37, together with TsaE and TsaB. TsaD likely plays a direct catalytic role in this reaction. This Sulfurihydrogenibium sp. (strain YO3AOP1) protein is tRNA N6-adenosine threonylcarbamoyltransferase.